A 327-amino-acid chain; its full sequence is Malate dehydrogenase (327 aa).

12–18 contacts NAD(+); it reads GAAGQIG. Substrate contacts are provided by Arg-93 and Arg-99. NAD(+) is bound by residues Asn-106, Gln-113, and 130–132; that span reads VGN. Substrate contacts are provided by Asn-132 and Arg-163. His-188 serves as the catalytic Proton acceptor.

Belongs to the LDH/MDH superfamily. MDH type 2 family.

The catalysed reaction is (S)-malate + NAD(+) = oxaloacetate + NADH + H(+). Catalyzes the reversible oxidation of malate to oxaloacetate. In Cupriavidus pinatubonensis (strain JMP 134 / LMG 1197) (Cupriavidus necator (strain JMP 134)), this protein is Malate dehydrogenase.